The chain runs to 220 residues: Iron-sulfur cluster repair protein YtfE (220 aa).

Belongs to the RIC family. YtfE subfamily. In terms of assembly, homodimer.

The protein resides in the cytoplasm. Di-iron-containing protein involved in the repair of iron-sulfur clusters damaged by oxidative and nitrosative stress conditions. The sequence is that of Iron-sulfur cluster repair protein YtfE from Enterobacter sp. (strain 638).